The following is a 305-amino-acid chain: Acetylglutamate kinase (305 aa).

Substrate is bound by residues 75-76 (GG), Arg-97, and Asn-202.

Belongs to the acetylglutamate kinase family. ArgB subfamily.

Its subcellular location is the cytoplasm. The catalysed reaction is N-acetyl-L-glutamate + ATP = N-acetyl-L-glutamyl 5-phosphate + ADP. The protein operates within amino-acid biosynthesis; L-arginine biosynthesis; N(2)-acetyl-L-ornithine from L-glutamate: step 2/4. Catalyzes the ATP-dependent phosphorylation of N-acetyl-L-glutamate. The sequence is that of Acetylglutamate kinase from Rhodospirillum centenum (strain ATCC 51521 / SW).